A 365-amino-acid chain; its full sequence is MAAAVTAAVSFPSTKSTPLSTRTSSVITHEKINFNKVPLYYRNVSVGGKVGTIRAVASDVEAPVAKVEKHSKKMEEGVIVNKYKPKNPYTGRCLLNTKITGDDAPGETWHMVFSHEGEIPYREGQSVGVIPEGIDKNGKPHKLRLYSIASRPLGDFGDSKTVSLCVKRLIYTNDNGEIVKGVCSNFLCDLKPGSEVVLTGPVGKEMLMPKDPNATIIMLATGTGIAPFRSFLWKMFFEKHDDYKFNGLAWLFLGVPTSSSLLYKEEFEKMKEKAPENFRLDFAVSREQTNEKGEKMYIQTRMAQYDRELWELLKKDNTYVYMCGLKGMEKGIDDIMVSLAAEDGIDWFDYKKQLKKAEQWNVEVY.

Residues 1–22 (MAAAVTAAVSFPSTKSTPLSTR) are disordered. Over residues 11–22 (FPSTKSTPLSTR) the composition is skewed to polar residues. The FAD-binding FR-type domain maps to 86–208 (KNPYTGRCLL…TGPVGKEMLM (123 aa)). Residues 144-147 (RLYS), 165-167 (CVK), Tyr-171, 182-184 (VCS), and Thr-223 contribute to the FAD site. Positions 147 and 167 each coordinate NADP(+). Residues Thr-223, 255–256 (VP), 285–286 (SR), Lys-295, 324–325 (GL), and Glu-363 contribute to the NADP(+) site.

It belongs to the ferredoxin--NADP reductase type 1 family. FAD is required as a cofactor.

It is found in the plastid. The protein resides in the chloroplast stroma. The protein localises to the chloroplast thylakoid membrane. The catalysed reaction is 2 reduced [2Fe-2S]-[ferredoxin] + NADP(+) + H(+) = 2 oxidized [2Fe-2S]-[ferredoxin] + NADPH. It participates in energy metabolism; photosynthesis. In terms of biological role, may play a key role in regulating the relative amounts of cyclic and non-cyclic electron flow to meet the demands of the plant for ATP and reducing power. The polypeptide is Ferredoxin--NADP reductase, chloroplastic (PETH) (Mesembryanthemum crystallinum (Common ice plant)).